The sequence spans 177 residues: 2''-aminoglycoside nucleotidyltransferase (177 aa).

Positions 44, 46, and 86 each coordinate Mg(2+). D86 serves as the catalytic Proton acceptor.

Requires Mg(2+) as cofactor.

It carries out the reaction nucleoside triphosphate + gentamicin = diphosphate + 2''-nucleotidylgentamicin.. In terms of biological role, mediates bacterial resistance to kanamycin, gentamicin, dibekacin, sisomicin, neomycin and tobramycin by adenylating the 2''-hydroxyl group of these antibiotics. This is 2''-aminoglycoside nucleotidyltransferase (aadB) from Klebsiella pneumoniae.